A 274-amino-acid polypeptide reads, in one-letter code: MSSKSHLPYAIRATNHPNPLTSKLFSIAEEKKTNVTVSADVTTSAELLDLADRLGPYIAVLKTHIDILTDLTPSTLSSLQSLATKHNFLIFEDRKFIDIGNTVQKQYHGGALRISEWAHIINCAILPGEGIVEALAQTTKSPDFKDANQRGLLILAEMTSKGSLATGEYTARSVEYARKYKGFVMGFVSTRALSEVLPEQKEESEDFVVFTTGVNLSDKGDKLGQQYQTPGSAVGRGADFIIAGRGIYKADDPVEAVQRYREEGWKAYEKRVGL.

Residues Asp-40, 62–64 (KTH), 93–102 (DRKFIDIGNT), Tyr-227, and Arg-245 each bind substrate. Residue Lys-95 is the Proton donor of the active site.

Belongs to the OMP decarboxylase family.

It carries out the reaction orotidine 5'-phosphate + H(+) = UMP + CO2. The protein operates within pyrimidine metabolism; UMP biosynthesis via de novo pathway; UMP from orotate: step 2/2. The protein is Orotidine 5'-phosphate decarboxylase (pyrG) of Emericella nidulans (strain FGSC A4 / ATCC 38163 / CBS 112.46 / NRRL 194 / M139) (Aspergillus nidulans).